The chain runs to 492 residues: Cytochrome P450 monooxygenase MYCFIDRAFT_204672 (492 aa).

N-linked (GlcNAc...) asparagine glycosylation is present at Asn-116. Residues 269-293 (FLISMIFISAANGCVVSGAMLYSIA) form a helical membrane-spanning segment. A glycan (N-linked (GlcNAc...) asparagine) is linked at Asn-335. Residue Cys-430 coordinates heme.

This sequence belongs to the cytochrome P450 family. Heme serves as cofactor.

Its subcellular location is the membrane. It functions in the pathway secondary metabolite biosynthesis. Functionally, cytochrome P450 monooxygenase; part of the gene cluster that mediates the biosynthesis of an emodin derivative that may be involved in black Sigatoka disease of banana. The pathway begins with the synthesis of atrochrysone thioester by the polyketide synthase PKS8-1. The atrochrysone carboxyl ACP thioesterase MYCFIDRAFT_190111 then breaks the thioester bond and releases the atrochrysone carboxylic acid from PKS8-1. The decarboxylase MYCFIDRAFT_34057 then catalyzes the concerted decarboxylation-elimination required to convert atochrysone carboxylic acid into emodin anthrone, which is further oxidized to emodin by the anthrone oxygenase MYCFIDRAFT_34418. The functions of the other tailoring enzymes as well as the final product of the cluster have still to be identified. This is Cytochrome P450 monooxygenase MYCFIDRAFT_204672 from Pseudocercospora fijiensis (strain CIRAD86) (Black leaf streak disease fungus).